Consider the following 240-residue polypeptide: UDP-2,3-diacylglucosamine hydrolase (240 aa).

Positions 8, 10, 41, 78, and 113 each coordinate Mn(2+). Position 78-79 (78-79) interacts with substrate; the sequence is NR. 5 residues coordinate substrate: aspartate 121, serine 159, asparagine 163, lysine 166, and histidine 194. Residues histidine 194 and histidine 196 each contribute to the Mn(2+) site.

The protein belongs to the LpxH family. Requires Mn(2+) as cofactor.

The protein resides in the cell inner membrane. It carries out the reaction UDP-2-N,3-O-bis[(3R)-3-hydroxytetradecanoyl]-alpha-D-glucosamine + H2O = 2-N,3-O-bis[(3R)-3-hydroxytetradecanoyl]-alpha-D-glucosaminyl 1-phosphate + UMP + 2 H(+). It functions in the pathway glycolipid biosynthesis; lipid IV(A) biosynthesis; lipid IV(A) from (3R)-3-hydroxytetradecanoyl-[acyl-carrier-protein] and UDP-N-acetyl-alpha-D-glucosamine: step 4/6. Functionally, hydrolyzes the pyrophosphate bond of UDP-2,3-diacylglucosamine to yield 2,3-diacylglucosamine 1-phosphate (lipid X) and UMP by catalyzing the attack of water at the alpha-P atom. Involved in the biosynthesis of lipid A, a phosphorylated glycolipid that anchors the lipopolysaccharide to the outer membrane of the cell. The protein is UDP-2,3-diacylglucosamine hydrolase of Shewanella baltica (strain OS195).